The primary structure comprises 254 residues: Adenosylcobinamide-GDP ribazoletransferase (254 aa).

Transmembrane regions (helical) follow at residues 28–48, 62–81, 109–129, 138–158, 179–199, and 200–220; these read FRQT…IVAL, IGVY…IDGI, VGVG…LGVL, VTFI…ALLV, LSLF…PYLG, and ASPT…IKQW.

The protein belongs to the CobS family. It depends on Mg(2+) as a cofactor.

Its subcellular location is the cell membrane. It carries out the reaction alpha-ribazole + adenosylcob(III)inamide-GDP = adenosylcob(III)alamin + GMP + H(+). The enzyme catalyses alpha-ribazole 5'-phosphate + adenosylcob(III)inamide-GDP = adenosylcob(III)alamin 5'-phosphate + GMP + H(+). The protein operates within cofactor biosynthesis; adenosylcobalamin biosynthesis; adenosylcobalamin from cob(II)yrinate a,c-diamide: step 7/7. Functionally, joins adenosylcobinamide-GDP and alpha-ribazole to generate adenosylcobalamin (Ado-cobalamin). Also synthesizes adenosylcobalamin 5'-phosphate from adenosylcobinamide-GDP and alpha-ribazole 5'-phosphate. This Haloquadratum walsbyi (strain DSM 16790 / HBSQ001) protein is Adenosylcobinamide-GDP ribazoletransferase.